We begin with the raw amino-acid sequence, 447 residues long: Large ribosomal subunit protein bL27m (447 aa).

Composition is skewed to basic and acidic residues over residues 377-402 and 409-447; these read QREA…KAEK and KVEK…EKKD. The segment at 377–447 is disordered; the sequence is QREAKKAREG…KKDSKTEKKD (71 aa).

It belongs to the bacterial ribosomal protein bL27 family. Component of the mitochondrial large ribosomal subunit (mt-LSU). Mature N.crassa 74S mitochondrial ribosomes consist of a small (37S) and a large (54S) subunit. The 37S small subunit contains a 16S ribosomal RNA (16S mt-rRNA) and 32 different proteins. The 54S large subunit contains a 23S rRNA (23S mt-rRNA) and 42 different proteins.

Its subcellular location is the mitochondrion. Its function is as follows. Component of the mitochondrial ribosome (mitoribosome), a dedicated translation machinery responsible for the synthesis of mitochondrial genome-encoded proteins, including at least some of the essential transmembrane subunits of the mitochondrial respiratory chain. The mitoribosomes are attached to the mitochondrial inner membrane and translation products are cotranslationally integrated into the membrane. This chain is Large ribosomal subunit protein bL27m (mrp7), found in Neurospora crassa (strain ATCC 24698 / 74-OR23-1A / CBS 708.71 / DSM 1257 / FGSC 987).